A 350-amino-acid chain; its full sequence is Ferredoxin--NADP reductase (350 aa).

T14, D33, Q41, Y46, A86, F121, D286, and T327 together coordinate FAD.

It belongs to the ferredoxin--NADP reductase type 2 family. As to quaternary structure, homodimer. It depends on FAD as a cofactor.

The enzyme catalyses 2 reduced [2Fe-2S]-[ferredoxin] + NADP(+) + H(+) = 2 oxidized [2Fe-2S]-[ferredoxin] + NADPH. The sequence is that of Ferredoxin--NADP reductase from Flavobacterium johnsoniae (strain ATCC 17061 / DSM 2064 / JCM 8514 / BCRC 14874 / CCUG 350202 / NBRC 14942 / NCIMB 11054 / UW101) (Cytophaga johnsonae).